The sequence spans 427 residues: Tumor necrosis factor receptor superfamily member 16 (427 aa).

An N-terminal signal peptide occupies residues 1–31 (MRRAGAACSAMDRLRLLLLLLLLLGVSFGGA). Over 32-254 (KETCSTGMYT…VVTRGTADNL (223 aa)) the chain is Extracellular. TNFR-Cys repeat units lie at residues 34-67 (TCST…QTVC), 69-110 (PCLD…DAVC), 111-149 (RCSY…NTVC), and 151-191 (ECPE…DAEC). 12 disulfides stabilise this stretch: cysteine 35–cysteine 46, cysteine 47–cysteine 60, cysteine 50–cysteine 67, cysteine 70–cysteine 86, cysteine 89–cysteine 102, cysteine 92–cysteine 110, cysteine 112–cysteine 125, cysteine 128–cysteine 141, cysteine 131–cysteine 149, cysteine 152–cysteine 167, cysteine 170–cysteine 183, and cysteine 173–cysteine 191. Asparagine 63 is a glycosylation site (N-linked (GlcNAc...) asparagine). Positions 197-223 (RWITRSTPPEGSDVTTPSTQEPEAPPE) are disordered. The span at 200 to 217 (TRSTPPEGSDVTTPSTQE) shows a compositional bias: polar residues. A helical membrane pass occupies residues 255–275 (IPVYCSILAAVVVGLVAYIAF). Residues 276 to 427 (KRWNSCKQNK…CSESTATSPV (152 aa)) lie on the Cytoplasmic side of the membrane. Composition is skewed to polar residues over residues 284-294 (NKQGANSRPVN) and 308-329 (SGIS…TASG). The disordered stretch occupies residues 284 to 334 (NKQGANSRPVNQTPPPEGEKLHSDSGISVDSQSLHDQQTHTQTASGQALKG). Residue serine 314 is modified to Phosphoserine. Residues 329-344 (GQALKGDGNLYSSLPL) are mediates interaction with KIDINS220. Residues 356–421 (GDTWRHLAGE…DIVESLCSES (66 aa)) form the Death domain.

As to quaternary structure, homodimer; disulfide-linked. Heterodimer with SORCS2. The extracellular domains of the heterodimer bind NGF. The cytoplasmic region of the heterodimer binds TRIO. NGF binding mediates dissociation of TRIO from the receptor complex. Interacts with TRAF2, TRAF4, TRAF6, PTPN13 and RANBP9. Interacts through TRAF6 with SQSTM1 which bridges NGFR to NTRK1. Interacts with BEX1. Interacts with BEX3. Interacts with KIDINS220 and NTRK1. Can form a ternary complex with NTRK1 and KIDINS220 and this complex is affected by the expression levels of KIDINS220. An increase in KIDINS220 expression leads to a decreased association of NGFR and NTRK1. Interacts (via death domain) with RAB31. Interacts with NTRK2; may regulate the ligand specificity of the NTRK2 receptor. Interacts with LINGO1. Interacts with NRADD. Interacts with MAGED1; the interaction antagonizes the association NGFR:NTRK1. Interacts with RTN4R. Interacts (via death domain) with ARHGDIA and RIPK2. Interacts with BFAR. (Microbial infection) Binds to rabies virus glycoprotein Gs. Post-translationally, N-glycosylated. O-glycosylated. Phosphorylated on serine residues. In terms of tissue distribution, detected in Schwann cells. Detected in embryonic brain, in hippocampus neurons (at protein level). Detected in brain and spinal cord.

The protein resides in the cell membrane. It is found in the cytoplasm. The protein localises to the perikaryon. It localises to the cell projection. Its subcellular location is the growth cone. The protein resides in the dendritic spine. In terms of biological role, low affinity neurotrophin receptor which can bind to mature NGF, BDNF, NTF3, and NTF4. Forms a heterodimeric receptor with SORCS2 that binds the precursor forms of NGF (proNGF), BDNF (proBDNF) and NTF3 (proNT3) with high affinity, and has much lower affinity for mature NGF and BDNF. Plays an important role in differentiation and survival of specific neuronal populations during development. Can mediate cell survival as well as cell death of neural cells. The heterodimeric receptor formed with SORCS2 plays a role in proBDNF-dependent synaptic plasticity, in hippocampal long term depression (LTD) and long term potentiation (LTP). Plays a role in the inactivation of RHOA. Plays a role in the regulation of the translocation of GLUT4 to the cell surface in adipocytes and skeletal muscle cells in response to insulin, probably by regulating RAB31 activity, and thereby contributes to the regulation of insulin-dependent glucose uptake. Necessary for the circadian oscillation of the clock genes BMAL1, PER1, PER2 and NR1D1 in the suprachiasmatic nucleus (SCN) of the brain and in liver and of the genes involved in glucose and lipid metabolism in the liver. (Microbial infection) Cell surface receptor for rabies virus glycoprotein Gs. Its function is as follows. Does not bind NGF, BDNF, NTF3, and NTF4. In Mus musculus (Mouse), this protein is Tumor necrosis factor receptor superfamily member 16 (Ngfr).